Here is a 167-residue protein sequence, read N- to C-terminus: Ribosome maturation factor RimM (167 aa).

The PRC barrel domain maps to 92-165 (EDTYYIADII…RITIDPIEGM (74 aa)).

Belongs to the RimM family. As to quaternary structure, binds ribosomal protein uS19.

It localises to the cytoplasm. Functionally, an accessory protein needed during the final step in the assembly of 30S ribosomal subunit, possibly for assembly of the head region. Essential for efficient processing of 16S rRNA. May be needed both before and after RbfA during the maturation of 16S rRNA. It has affinity for free ribosomal 30S subunits but not for 70S ribosomes. The chain is Ribosome maturation factor RimM from Alkaliphilus oremlandii (strain OhILAs) (Clostridium oremlandii (strain OhILAs)).